A 310-amino-acid polypeptide reads, in one-letter code: Upstream stimulatory factor 1 (310 aa).

A compositionally biased stretch (polar residues) spans M1–I17. Disordered regions lie at residues M1–E26 and Q171–R209. Basic and acidic residues predominate over residues E190–R209. Positions K199 to L254 constitute a bHLH domain. Positions L271–L292 are leucine-zipper. A Glycyl lysine isopeptide (Lys-Gly) (interchain with G-Cter in SUMO2) cross-link involves residue K306.

As to quaternary structure, efficient DNA binding requires dimerization with another bHLH protein. Binds DNA as a homodimer or a heterodimer (USF1/USF2).

Its subcellular location is the nucleus. In terms of biological role, transcription factor that binds to a symmetrical DNA sequence (E-boxes) (5'-CACGTG-3') that is found in a variety of viral and cellular promoters. The chain is Upstream stimulatory factor 1 (Usf1) from Mus musculus (Mouse).